Consider the following 95-residue polypeptide: Small ribosomal subunit protein bS18 (95 aa).

Belongs to the bacterial ribosomal protein bS18 family. As to quaternary structure, part of the 30S ribosomal subunit. Forms a tight heterodimer with protein bS6.

In terms of biological role, binds as a heterodimer with protein bS6 to the central domain of the 16S rRNA, where it helps stabilize the platform of the 30S subunit. This is Small ribosomal subunit protein bS18 from Rickettsia peacockii (strain Rustic).